We begin with the raw amino-acid sequence, 721 residues long: MVARKFVVRHEDSSFDVDYNTEDGLEVLRFLIFSLTLVPPEEQKIVAEDDNRLVSDESDLASLSERLRLVSVGEDSVENSDAEMLKSDEELARMLQAEEDAIMFQQFVAARDNGEFEGRIRPYVSQVLMYEDPVRQDAARKTVPKDELEEKALVSLAKEGNFEPSKEERDYAFLLQLLFWFKKSFRWVNEPPCDFCGNKTIGQGMGNPLTSELAYGANRVEIYRCTMCPTTTRFPRYNDPLKLVETKKGRCGEWANCFTLYCRTFGYDSRLIMDFTDHVWTECYSHSLKRWIHLDPCEGVYDKPMLYEKGWNKKLNYVIAISKDGVCDVTKRYTKKWHEVLSRRTLTTESSLQDGLRTLTRERRRSLMFESLSKLELRDRNEQEELERNLHSADNASVSLPGRQSGDREWRIMRSEFGSDENSSVSSSSCPVRKCVDDHVTNIYDSFLPILTQFVEDGLPVARTNEVLKMIKQVLVDLKNAPYKTRKARLTLDSDNSSSFPEQFLPALGDLLLALSLKSERDTNGKSVTISVDGKLTKTAIALPVALDALRELVADLSKYQNLNKDSLSFPLVKQNRVCSGSVLASGEELPSGIATAAFDGIQESKWEEPNGAKGCWIVYKTLYNQMHQLIAYELMSANDAPERDPKDWILEGSNDGGSTWCVLDKQTSQVFEERFQRKSYKITTPGFQANLFRFRFLSVRDVNSTSRLQLGSIDLYRSHQ.

Residues C193, C196, C225, and C228 each contribute to the Zn(2+) site. Catalysis depends on C251, which acts as the Nucleophile. Active-site residues include H278 and D295.

This sequence belongs to the transglutaminase-like superfamily. PNGase family. Requires Zn(2+) as cofactor.

The protein localises to the cytoplasm. The catalysed reaction is Hydrolysis of an N(4)-(acetyl-beta-D-glucosaminyl)asparagine residue in which the glucosamine residue may be further glycosylated, to yield a (substituted) N-acetyl-beta-D-glucosaminylamine and a peptide containing an aspartate residue.. In terms of biological role, specifically deglycosylates the denatured form of N-linked glycoproteins in the cytoplasm and assists their proteasome-mediated degradation. Cleaves the beta-aspartyl-glucosamine (GlcNAc) of the glycan and the amide side chain of Asn, converting Asn to Asp. Prefers proteins containing high-mannose over those bearing complex type oligosaccharides. Can recognize misfolded proteins in the endoplasmic reticulum that are exported to the cytosol to be destroyed and deglycosylate them, while it has no activity toward native proteins. Deglycosylation is a prerequisite for subsequent proteasome-mediated degradation of some, but not all, misfolded glycoproteins. This chain is Peptide-N(4)-(N-acetyl-beta-glucosaminyl)asparagine amidase (PNG1), found in Arabidopsis thaliana (Mouse-ear cress).